A 496-amino-acid polypeptide reads, in one-letter code: Cytochrome P450 4ae1 (496 aa).

Residue Cys443 coordinates heme.

Belongs to the cytochrome P450 family. Heme serves as cofactor.

It is found in the endoplasmic reticulum membrane. Its subcellular location is the microsome membrane. Functionally, may be involved in the metabolism of insect hormones and in the breakdown of synthetic insecticides. The protein is Cytochrome P450 4ae1 (Cyp4ae1) of Drosophila melanogaster (Fruit fly).